The chain runs to 445 residues: Phosphoglucosamine mutase (445 aa).

The Phosphoserine intermediate role is filled by Ser102. Residues Ser102, Asp241, Asp243, and Asp245 each coordinate Mg(2+). The residue at position 102 (Ser102) is a Phosphoserine.

The protein belongs to the phosphohexose mutase family. Mg(2+) is required as a cofactor. In terms of processing, activated by phosphorylation.

It carries out the reaction alpha-D-glucosamine 1-phosphate = D-glucosamine 6-phosphate. Its function is as follows. Catalyzes the conversion of glucosamine-6-phosphate to glucosamine-1-phosphate. The chain is Phosphoglucosamine mutase from Edwardsiella ictaluri (strain 93-146).